The chain runs to 160 residues: Cytochrome b6-f complex subunit 4 (160 aa).

Helical transmembrane passes span 36–56 (LLYMFPVVILGTFALSISLAV), 95–115 (LLGVLCMAAVPVGLITVPFIE), and 131–151 (TLFLFGTATAVWLGIGAALPI).

This sequence belongs to the cytochrome b family. PetD subfamily. In terms of assembly, the 4 large subunits of the cytochrome b6-f complex are cytochrome b6, subunit IV (17 kDa polypeptide, petD), cytochrome f and the Rieske protein, while the 4 small subunits are petG, petL, petM and petN. The complex functions as a dimer.

Its subcellular location is the plastid. It localises to the chloroplast thylakoid membrane. Its function is as follows. Component of the cytochrome b6-f complex, which mediates electron transfer between photosystem II (PSII) and photosystem I (PSI), cyclic electron flow around PSI, and state transitions. The protein is Cytochrome b6-f complex subunit 4 of Oltmannsiellopsis viridis (Marine flagellate).